A 314-amino-acid chain; its full sequence is Methionyl-tRNA formyltransferase (314 aa).

A (6S)-5,6,7,8-tetrahydrofolate-binding site is contributed by 109–112 (SVLP).

Belongs to the Fmt family.

The catalysed reaction is L-methionyl-tRNA(fMet) + (6R)-10-formyltetrahydrofolate = N-formyl-L-methionyl-tRNA(fMet) + (6S)-5,6,7,8-tetrahydrofolate + H(+). Attaches a formyl group to the free amino group of methionyl-tRNA(fMet). The formyl group appears to play a dual role in the initiator identity of N-formylmethionyl-tRNA by promoting its recognition by IF2 and preventing the misappropriation of this tRNA by the elongation apparatus. The chain is Methionyl-tRNA formyltransferase from Dictyoglomus turgidum (strain DSM 6724 / Z-1310).